The following is a 551-amino-acid chain: Dihydroxy-acid dehydratase (551 aa).

D78 provides a ligand contact to Mg(2+). C119 lines the [2Fe-2S] cluster pocket. Mg(2+) contacts are provided by D120 and K121. K121 carries the N6-carboxylysine modification. A [2Fe-2S] cluster-binding site is contributed by C191. Mg(2+) is bound at residue E441. S467 functions as the Proton acceptor in the catalytic mechanism.

The protein belongs to the IlvD/Edd family. Homodimer. It depends on [2Fe-2S] cluster as a cofactor. Mg(2+) is required as a cofactor.

The enzyme catalyses (2R)-2,3-dihydroxy-3-methylbutanoate = 3-methyl-2-oxobutanoate + H2O. The catalysed reaction is (2R,3R)-2,3-dihydroxy-3-methylpentanoate = (S)-3-methyl-2-oxopentanoate + H2O. The protein operates within amino-acid biosynthesis; L-isoleucine biosynthesis; L-isoleucine from 2-oxobutanoate: step 3/4. It participates in amino-acid biosynthesis; L-valine biosynthesis; L-valine from pyruvate: step 3/4. Functionally, functions in the biosynthesis of branched-chain amino acids. Catalyzes the dehydration of (2R,3R)-2,3-dihydroxy-3-methylpentanoate (2,3-dihydroxy-3-methylvalerate) into 2-oxo-3-methylpentanoate (2-oxo-3-methylvalerate) and of (2R)-2,3-dihydroxy-3-methylbutanoate (2,3-dihydroxyisovalerate) into 2-oxo-3-methylbutanoate (2-oxoisovalerate), the penultimate precursor to L-isoleucine and L-valine, respectively. The chain is Dihydroxy-acid dehydratase from Pyrococcus abyssi (strain GE5 / Orsay).